A 164-amino-acid polypeptide reads, in one-letter code: LWamide neuropeptides (164 aa).

Residues 1 to 6 constitute a propeptide that is removed on maturation; that stretch reads RSADAQ. The segment at 1–92 is disordered; it reads RSADAQQHGL…WGRSADAQQP (92 aa). Residues W11 and W20 each carry the tryptophan amide modification. Positions 23 to 27 are excised as a propeptide; the sequence is SADAQ. Tryptophan amide is present on residues W32 and W41. Residues 44-49 constitute a propeptide that is removed on maturation; sequence SAEPGQ. Tryptophan amide occurs at positions 53 and 62. Residues 65–70 constitute a propeptide that is removed on maturation; it reads SAEPLQ. Tryptophan amide is present on residues W74 and W83. Positions 86-90 are excised as a propeptide; it reads SADAQ. W95, W106, and W115 each carry tryptophan amide. Positions 118–123 are excised as a propeptide; the sequence is SADPGQ. Tryptophan amide is present on residues W127 and W137. A propeptide spanning residues 140–164 is cleaved from the precursor; it reads SYEPPQFEDLEDLKKKSAIPKPSEQ.

This sequence belongs to the LWamide neuropeptide family.

Its subcellular location is the secreted. Metamorphosin A may be part of an internal signaling system involved in control of metamorphosis. The sequence is that of LWamide neuropeptides from Actinia equina (Beadlet anemone).